The following is an 86-amino-acid chain: Small ribosomal subunit protein bS20 (86 aa).

Belongs to the bacterial ribosomal protein bS20 family.

Binds directly to 16S ribosomal RNA. The protein is Small ribosomal subunit protein bS20 of Rhodococcus erythropolis (strain PR4 / NBRC 100887).